Consider the following 231-residue polypeptide: Large ribosomal subunit protein uL1 (231 aa).

It belongs to the universal ribosomal protein uL1 family. In terms of assembly, part of the 50S ribosomal subunit.

In terms of biological role, binds directly to 23S rRNA. The L1 stalk is quite mobile in the ribosome, and is involved in E site tRNA release. Functionally, protein L1 is also a translational repressor protein, it controls the translation of the L11 operon by binding to its mRNA. The polypeptide is Large ribosomal subunit protein uL1 (Nitrosococcus oceani (strain ATCC 19707 / BCRC 17464 / JCM 30415 / NCIMB 11848 / C-107)).